Reading from the N-terminus, the 287-residue chain is Mitochondrial dicarboxylate carrier (287 aa).

Solcar repeat units follow at residues 7–87 (SRWY…MRDY), 100–187 (NKVL…AKQL), and 196–279 (DNIF…LRKH). The next 3 membrane-spanning stretches (helical) occupy residues 9-29 (WYFG…LDLL), 62-81 (GLSA…FAIY), and 102-122 (VLLG…ADLV). At Lys-158 the chain carries N6-acetyllysine. Helical transmembrane passes span 162–181 (GATM…LSCY), 202–222 (FVSS…LDVL), and 254–274 (GLFP…MFLE).

The protein belongs to the mitochondrial carrier (TC 2.A.29) family. As to expression, expressed at very high levels in white adipose tissue. And at low levels in brown adipose tissue, kidney and liver.

It localises to the mitochondrion inner membrane. It carries out the reaction (S)-malate(in) + phosphate(out) = (S)-malate(out) + phosphate(in). The enzyme catalyses malonate(out) + (S)-malate(in) = malonate(in) + (S)-malate(out). The catalysed reaction is (S)-malate(in) + succinate(out) = (S)-malate(out) + succinate(in). It catalyses the reaction (S)-malate(in) + sulfate(out) = (S)-malate(out) + sulfate(in). It carries out the reaction malonate(out) + phosphate(in) = malonate(in) + phosphate(out). The enzyme catalyses succinate(out) + phosphate(in) = succinate(in) + phosphate(out). The catalysed reaction is sulfate(out) + phosphate(in) = sulfate(in) + phosphate(out). It catalyses the reaction malonate(out) + succinate(in) = malonate(in) + succinate(out). Its activity is regulated as follows. Regulated by circadian protein CLOCK (Circadian Locomotor Output Cycles Kaput). In terms of biological role, catalyzes the electroneutral exchange or flux of physiologically important metabolites such as dicarboxylates (malonate, malate, succinate), inorganic sulfur-containing anions, and phosphate, across mitochondrial inner membrane. Plays an important role in gluconeogenesis, fatty acid metabolism, urea synthesis, and sulfur metabolism, particularly in liver, by supplying the substrates for the different metabolic processes. Regulates fatty acid release from adipocytes, and contributes to systemic insulin sensitivity. This is Mitochondrial dicarboxylate carrier from Mus musculus (Mouse).